Consider the following 398-residue polypeptide: Pectate lyase 1 (398 aa).

Residues 1-25 (MGIKHCCYILYFTLALVTLLQPVRS) form the signal peptide. N-linked (GlcNAc...) asparagine glycosylation is present at N37. An intrachain disulfide couples C55 to C72. Residues D195, D219, and D223 each coordinate Ca(2+). The active site involves R275.

The protein belongs to the polysaccharide lyase 1 family. Amb a subfamily. Monomer. The cofactor is Ca(2+). The N-terminus is blocked. Pollen and flowers.

The enzyme catalyses Eliminative cleavage of (1-&gt;4)-alpha-D-galacturonan to give oligosaccharides with 4-deoxy-alpha-D-galact-4-enuronosyl groups at their non-reducing ends.. The protein operates within glycan metabolism; pectin degradation; 2-dehydro-3-deoxy-D-gluconate from pectin: step 2/5. Its function is as follows. Has pectate lyase activity. The polypeptide is Pectate lyase 1 (Ambrosia artemisiifolia (Common ragweed)).